Reading from the N-terminus, the 74-residue chain is ATP synthase subunit c (74 aa).

The next 2 helical transmembrane spans lie at 8-28 and 52-72; these read FIGT…VSNI and IGAG…MLLI.

The protein belongs to the ATPase C chain family. F-type ATPases have 2 components, F(1) - the catalytic core - and F(0) - the membrane proton channel. F(1) has five subunits: alpha(3), beta(3), gamma(1), delta(1), epsilon(1). F(0) has three main subunits: a(1), b(2) and c(10-14). The alpha and beta chains form an alternating ring which encloses part of the gamma chain. F(1) is attached to F(0) by a central stalk formed by the gamma and epsilon chains, while a peripheral stalk is formed by the delta and b chains.

Its subcellular location is the cell inner membrane. Its function is as follows. F(1)F(0) ATP synthase produces ATP from ADP in the presence of a proton or sodium gradient. F-type ATPases consist of two structural domains, F(1) containing the extramembraneous catalytic core and F(0) containing the membrane proton channel, linked together by a central stalk and a peripheral stalk. During catalysis, ATP synthesis in the catalytic domain of F(1) is coupled via a rotary mechanism of the central stalk subunits to proton translocation. In terms of biological role, key component of the F(0) channel; it plays a direct role in translocation across the membrane. A homomeric c-ring of between 10-14 subunits forms the central stalk rotor element with the F(1) delta and epsilon subunits. This chain is ATP synthase subunit c, found in Rickettsia conorii (strain ATCC VR-613 / Malish 7).